Here is a 71-residue protein sequence, read N- to C-terminus: UPF0352 protein Ssed_1809 (71 aa).

The protein belongs to the UPF0352 family.

The chain is UPF0352 protein Ssed_1809 from Shewanella sediminis (strain HAW-EB3).